The primary structure comprises 128 residues: uncharacterized protein (128 aa).

The next 2 helical transmembrane spans lie at 45-65 (GYFH…LFPF) and 95-115 (FMSH…LSCF).

It localises to the membrane. This is an uncharacterized protein from Saccharomyces cerevisiae (strain ATCC 204508 / S288c) (Baker's yeast).